A 403-amino-acid chain; its full sequence is GPI mannosyltransferase 1 (403 aa).

The Cytoplasmic portion of the chain corresponds to 1–4 (MTGE). Residues 5–25 (EWGLTVLSFLVRVGFFLFGIY) traverse the membrane as a helical segment. Residues 26–78 (QDANFKVRYTDIDYFVFHDAAKYVYEGKSPYARDTYRYTPLLSWLLVPNHYFG) are Lumenal-facing. Residues 79 to 99 (WFHLGKVIFVIFDLVTGLIIM) traverse the membrane as a helical segment. Over 100–110 (KLLNQAISRKR) the chain is Cytoplasmic. Residues 111–131 (ALILESIWLLNPMVITISTRG) form a helical membrane-spanning segment. A topological domain (lumenal) is located at residue Asn-132. Residues 133 to 149 (AESVLCCLIMFTLFFLQ) form a helical membrane-spanning segment. Over 150-160 (KSRYTLAGILY) the chain is Cytoplasmic. Residues 161–181 (GLSIHFKIYPIIYCIPIAIFI) traverse the membrane as a helical segment. Over 182–193 (YYNKRNQGPRTQ) the chain is Lumenal. A helical membrane pass occupies residues 194-214 (LTSLLNIGLSTLTTLLGCGWA). Residues 215 to 266 (MYKIYGYEFLDQAYLYHLYRTDHRHNFSVWNMLLYLDSANKENGESNLSRYA) are Cytoplasmic-facing. The chain crosses the membrane as a helical span at residues 267–287 (FVPQLLLVLVTGCLEWWNPTF). The Lumenal portion of the chain corresponds to 288–310 (DNLLRVLFVQTFAFVTYNKVCTS). A helical transmembrane segment spans residues 311–331 (QYFVWYLIFLPFYLSRTHIGW). Over 332 to 334 (KKG) the chain is Cytoplasmic. Residues 335–355 (LLMATLWVGTQGIWLSQGYYL) traverse the membrane as a helical segment. Residues 356–361 (EFEGKN) are Lumenal-facing. A helical membrane pass occupies residues 362-382 (VFYPGLFIASVLFFVTNVWLL). The Cytoplasmic portion of the chain corresponds to 383-403 (GQFITDIKIPTQPTVSNKKNN).

It belongs to the PIGM family.

It localises to the endoplasmic reticulum membrane. It functions in the pathway glycolipid biosynthesis; glycosylphosphatidylinositol-anchor biosynthesis. In terms of biological role, mannosyltransferase involved in glycosylphosphatidylinositol-anchor biosynthesis. Transfers the first alpha-1,4-mannose to GlcN-acyl-PI during GPI precursor assembly. Required for cell wall integrity. This chain is GPI mannosyltransferase 1 (GPI14), found in Saccharomyces cerevisiae (strain ATCC 204508 / S288c) (Baker's yeast).